A 171-amino-acid polypeptide reads, in one-letter code: Translationally-controlled tumor protein homolog (171 aa).

The TCTP domain occupies 1 to 171; the sequence is MKIWKDVFTG…FKHGLEEEKF (171 aa).

Belongs to the TCTP family.

The protein localises to the cytoplasm. Functionally, involved in calcium binding and microtubule stabilization. This chain is Translationally-controlled tumor protein homolog, found in Anopheles gambiae (African malaria mosquito).